The following is a 251-amino-acid chain: Large ribosomal subunit protein uL2 (251 aa).

The segment covering 1–12 (MGKRLRVQRHGR) has biased composition (basic residues). Residues 1 to 22 (MGKRLRVQRHGRGTPQWRNRGH) form a disordered region.

It belongs to the universal ribosomal protein uL2 family. As to quaternary structure, part of the 50S ribosomal subunit. Forms a bridge to the 30S subunit in the 70S ribosome.

Its function is as follows. One of the primary rRNA binding proteins. Required for association of the 30S and 50S subunits to form the 70S ribosome, for tRNA binding and peptide bond formation. It has been suggested to have peptidyltransferase activity; this is somewhat controversial. Makes several contacts with the 16S rRNA in the 70S ribosome. The chain is Large ribosomal subunit protein uL2 from Ignicoccus hospitalis (strain KIN4/I / DSM 18386 / JCM 14125).